The chain runs to 189 residues: Cancer/testis antigen family 45 member A5 (189 aa).

Over residues 1–23 (MTDKTEKVAVDPETVFKRPRECD) the composition is skewed to basic and acidic residues. 2 disordered regions span residues 1 to 27 (MTDK…SPSY) and 82 to 118 (DGMM…SPKS).

Belongs to the CT45 family. In terms of tissue distribution, testis specific. Expressed in cancer cell lines.

The protein resides in the nucleus. The chain is Cancer/testis antigen family 45 member A5 from Homo sapiens (Human).